The primary structure comprises 378 residues: Alkanesulfonate monooxygenase (378 aa).

It belongs to the SsuD family.

It carries out the reaction an alkanesulfonate + FMNH2 + O2 = an aldehyde + FMN + sulfite + H2O + 2 H(+). Its function is as follows. Catalyzes the desulfonation of aliphatic sulfonates. The polypeptide is Alkanesulfonate monooxygenase (Bacillus velezensis (strain DSM 23117 / BGSC 10A6 / LMG 26770 / FZB42) (Bacillus amyloliquefaciens subsp. plantarum)).